The primary structure comprises 231 residues: Cytidylate kinase (231 aa).

Residue 11–19 coordinates ATP; that stretch reads GHSSCGKST.

This sequence belongs to the cytidylate kinase family. Type 1 subfamily.

Its subcellular location is the cytoplasm. It catalyses the reaction CMP + ATP = CDP + ADP. The catalysed reaction is dCMP + ATP = dCDP + ADP. This chain is Cytidylate kinase, found in Porphyromonas gingivalis (strain ATCC BAA-308 / W83).